The primary structure comprises 298 residues: NFU1 iron-sulfur cluster scaffold homolog, mitochondrial (298 aa).

The nifU stretch occupies residues 194–262 (IKELLDTRIR…IPEVESVEQV (69 aa)). Residues cysteine 231 and cysteine 234 each coordinate [4Fe-4S] cluster.

The protein belongs to the NifU family.

It localises to the mitochondrion. Functionally, molecular scaffold for [Fe-S] cluster assembly of mitochondrial iron-sulfur proteins. The chain is NFU1 iron-sulfur cluster scaffold homolog, mitochondrial from Drosophila grimshawi (Hawaiian fruit fly).